The following is a 753-amino-acid chain: Synaptotagmin-like protein 5 (753 aa).

The RabBD domain occupies 7-123 (FINLSFLLDH…IISGEWFLEE (117 aa)). An FYVE-type zinc finger spans residues 64–106 (CVHCHKTLGLIFDRGDPCQACSLRVCSECRVTGLDGSWKCTVC). Disordered stretches follow at residues 145-279 (RRSP…SREH), 297-359 (LTKS…LNSL), and 380-404 (LASG…VPDA). S147 carries the post-translational modification Phosphoserine. Residues 150–174 (SEETQNQEQAQQCVDKSDTLSSVRQ) show a composition bias toward polar residues. Positions 195–206 (TRGEIRTPKPES) are enriched in basic and acidic residues. Polar residues predominate over residues 214–223 (LDSQNLQSFK). A compositionally biased stretch (low complexity) spans 224 to 237 (SASGSDRGSTTSSD). The span at 249–275 (KSSYSNGGIPVTQRSPVPSAHSVTSIN) shows a compositional bias: polar residues. The span at 380–391 (LASGLSTNSQAG) shows a compositional bias: polar residues. 2 consecutive C2 domains span residues 429-550 (VTGE…DEWF) and 597-717 (KRGK…VDWM).

Binds RAB27A that has been activated by GTP-binding.

It localises to the membrane. Its function is as follows. May act as Rab effector protein and play a role in vesicle trafficking. Binds phospholipids. In Mus musculus (Mouse), this protein is Synaptotagmin-like protein 5 (Sytl5).